Here is a 532-residue protein sequence, read N- to C-terminus: Collagen alpha-1(XXIII) chain (532 aa).

The Cytoplasmic portion of the chain corresponds to 1–23; it reads MGAGERAAGGGGTQDPGAGCGAR. Residues 24 to 45 traverse the membrane as a helical; Signal-anchor for type II membrane protein segment; it reads ALGALCLLLSVGSATACLLLGA. Residues 46–532 lie on the Extracellular side of the membrane; sequence QAAALHGRVA…GLPVPGCWHK (487 aa). Residues 102–532 form a disordered region; sequence PSECICPPGP…GLPVPGCWHK (431 aa). Collagen-like domains lie at 108–163, 173–232, 242–297, and 313–372; these read PPGP…FGPR, GPPG…PGKK, GLPG…EQGD, and GPPG…MGLS. Composition is skewed to low complexity over residues 129–145 and 157–172; these read QSGR…DGKP and PGDF…DGAA. 3 stretches are compositionally biased toward pro residues: residues 174–184, 241–250, and 314–326; these read PPGPPGPPGAR, PGLPGPPGPK, and PPGP…PPGI. 2 stretches are compositionally biased toward basic and acidic residues: residues 342–354 and 380–393; these read DGEK…KGDP and PKGE…DHLQ. Residues 403-414 show a composition bias toward pro residues; sequence PGPPGPPGPPGP. Collagen-like domains follow at residues 404 to 452 and 455 to 514; these read GPPG…GPPG and GLPG…PGLD. 2 stretches are compositionally biased toward basic and acidic residues: residues 427–441 and 478–495; these read DGAK…ERGP and RGEK…ERGV.

In terms of assembly, homotrimer. In terms of processing, undergoes proteolytic cleavage by furin protease to yield a 60 kDa soluble form that forms a homotrimer and exhibits a low affinity interaction with heparin.

The protein resides in the cell membrane. The sequence is that of Collagen alpha-1(XXIII) chain (Col23a1) from Rattus norvegicus (Rat).